The sequence spans 580 residues: Phosphomethylpyrimidine synthase (580 aa).

A disordered region spans residues 1–58; the sequence is MTPTQNEIHPKHSYSPIRKHGLEVPETEIALDDSPSGPNEPFRIYRTRGPETDPTLGL. Residues asparagine 180, methionine 209, tyrosine 238, histidine 274, 294–296, 335–338, and glutamate 374 contribute to the substrate site; these read SRG and DGLR. Zn(2+) is bound at residue histidine 378. Substrate is bound at residue tyrosine 401. Residue histidine 442 coordinates Zn(2+). Positions 522, 525, and 530 each coordinate [4Fe-4S] cluster. Residues 554–580 are disordered; sequence VGASDSTEGMKEKSREFVAGGGEVYRE.

This sequence belongs to the ThiC family. [4Fe-4S] cluster serves as cofactor.

The enzyme catalyses 5-amino-1-(5-phospho-beta-D-ribosyl)imidazole + S-adenosyl-L-methionine = 4-amino-2-methyl-5-(phosphooxymethyl)pyrimidine + CO + 5'-deoxyadenosine + formate + L-methionine + 3 H(+). It functions in the pathway cofactor biosynthesis; thiamine diphosphate biosynthesis. Catalyzes the synthesis of the hydroxymethylpyrimidine phosphate (HMP-P) moiety of thiamine from aminoimidazole ribotide (AIR) in a radical S-adenosyl-L-methionine (SAM)-dependent reaction. This chain is Phosphomethylpyrimidine synthase, found in Corynebacterium efficiens (strain DSM 44549 / YS-314 / AJ 12310 / JCM 11189 / NBRC 100395).